The sequence spans 286 residues: Enoyl-CoA hydratase ChsH3 (286 aa).

Residues A163–T271 enclose the MaoC-like domain. Residues D189 and H194 contribute to the active site.

The protein belongs to the enoyl-CoA hydratase/isomerase family. As to quaternary structure, homodimer.

It catalyses the reaction (22E)-3-oxochola-4,22-dien-24-oyl-CoA + H2O = (22S)-hydroxy-3-oxo-chol-4-ene-24-oyl-CoA. Its pathway is steroid metabolism; cholesterol degradation. Its function is as follows. Degradation of the cholesterol side chain involves 3 multistep beta-oxidation cycles, this is involved in the second cycle. Hydrates bulky steroid enoyl-CoA esters, has highest activity with 3-OCDO-CoA (3-oxochol-4,22-dien-24-oyl-CoA) making (22S)-HOCO-CoA, followed by octenoyl-CoA, with weaker activity on 3-OCDS-CoA (3-oxocholest-4,24-dien-26-oyl-CoA) and none on 3-OPDC-CoA (3-oxo-pregna-4,17-diene-20- carboxyl-CoA). Hydrates the same substrate as EchA19, but the 2 enzymes make different stereoisomers of the product. This chain is Enoyl-CoA hydratase ChsH3, found in Mycobacterium tuberculosis (strain ATCC 25618 / H37Rv).